The chain runs to 336 residues: MPPPAPGARLRLLAAAALAGLAVISRGLLSQSLEFSSPADNYTVCEGDNATLSCFIDEHVTRVAWLNRSNILYAGNDRWTSDPRVRLLINTPEEFSILITQVGLGDEGLYTCSFQTRHQPYTTQVYLIVHVPARIVNISSPVAVNEGGNVNLLCLAVGRPEPTVTWRQLRDGFTSEGEILEISDIQRGQAGEYECVTHNGVNSAPDSRRVLVTVNYPPTITDVTSARTALGRAALLRCEAMAVPPADFQWYKDDRLLSSGSAEGLKVQTERTRSMLLFANVSARHYGNYTCRAANRLGASSASMRLLRPGSLENSAPRPPGPLTLLSALSWLWWRM.

The signal sequence occupies residues 1–30; sequence MPPPAPGARLRLLAAAALAGLAVISRGLLS. 3 Ig-like C2-type domains span residues 33-122, 132-213, and 218-307; these read LEFS…QPYT, PARI…VLVT, and PTIT…MRLL. N-linked (GlcNAc...) asparagine glycans are attached at residues Asn41, Asn49, Asn67, and Asn137. An intrachain disulfide couples Cys54 to Cys112. Disulfide bonds link Cys154-Cys195 and Cys238-Cys291. The N-linked (GlcNAc...) asparagine glycan is linked to Asn288.

The protein belongs to the immunoglobulin superfamily. IgLON family.

It localises to the secreted. The polypeptide is IgLON family member 5 (Iglon5) (Mus musculus (Mouse)).